Reading from the N-terminus, the 123-residue chain is MPTINQLVRKGREPQKAKSKVPAMEQNPQKRGVCTRVYTTTPKKPNSALRKVAKIRLTNSREVISYIPGEGHNLQEHSVVLIRGGRVRDLPGVRYHVLRGVLDTQGVKDRKQSRSKYGAKRPK.

A disordered region spans residues 1–29 (MPTINQLVRKGREPQKAKSKVPAMEQNPQ). 3-methylthioaspartic acid is present on aspartate 89.

This sequence belongs to the universal ribosomal protein uS12 family. As to quaternary structure, part of the 30S ribosomal subunit. Contacts proteins S8 and S17. May interact with IF1 in the 30S initiation complex.

In terms of biological role, with S4 and S5 plays an important role in translational accuracy. Its function is as follows. Interacts with and stabilizes bases of the 16S rRNA that are involved in tRNA selection in the A site and with the mRNA backbone. Located at the interface of the 30S and 50S subunits, it traverses the body of the 30S subunit contacting proteins on the other side and probably holding the rRNA structure together. The combined cluster of proteins S8, S12 and S17 appears to hold together the shoulder and platform of the 30S subunit. The protein is Small ribosomal subunit protein uS12 of Novosphingobium aromaticivorans (strain ATCC 700278 / DSM 12444 / CCUG 56034 / CIP 105152 / NBRC 16084 / F199).